The sequence spans 549 residues: Oxygen-dependent choline dehydrogenase (549 aa).

4-33 (DFVIIGSGSAGSAMAYRLSEDGRYSVIVIE) contacts FAD. H465 acts as the Proton acceptor in catalysis.

The protein belongs to the GMC oxidoreductase family. Requires FAD as cofactor.

The enzyme catalyses choline + A = betaine aldehyde + AH2. It catalyses the reaction betaine aldehyde + NAD(+) + H2O = glycine betaine + NADH + 2 H(+). The protein operates within amine and polyamine biosynthesis; betaine biosynthesis via choline pathway; betaine aldehyde from choline (cytochrome c reductase route): step 1/1. Involved in the biosynthesis of the osmoprotectant glycine betaine. Catalyzes the oxidation of choline to betaine aldehyde and betaine aldehyde to glycine betaine at the same rate. The protein is Oxygen-dependent choline dehydrogenase of Brucella ovis (strain ATCC 25840 / 63/290 / NCTC 10512).